Here is a 341-residue protein sequence, read N- to C-terminus: Glyceraldehyde-3-phosphate dehydrogenase 2 (341 aa).

NAD(+) contacts are provided by residues 12-13 (RI), Arg78, and Thr120. Residues 152–154 (SCT) and Thr183 contribute to the D-glyceraldehyde 3-phosphate site. The active-site Nucleophile is Cys153. Residue Asn184 coordinates NAD(+). Residues Arg198, 211 to 212 (TG), and Arg234 contribute to the D-glyceraldehyde 3-phosphate site. NAD(+) is bound at residue Asn313.

Belongs to the glyceraldehyde-3-phosphate dehydrogenase family. Homotetramer.

Its subcellular location is the cytoplasm. The catalysed reaction is D-glyceraldehyde 3-phosphate + phosphate + NAD(+) = (2R)-3-phospho-glyceroyl phosphate + NADH + H(+). Its pathway is carbohydrate degradation; glycolysis; pyruvate from D-glyceraldehyde 3-phosphate: step 1/5. Its function is as follows. Catalyzes the oxidative phosphorylation of glyceraldehyde 3-phosphate (G3P) to 1,3-bisphosphoglycerate (BPG) using the cofactor NAD. The first reaction step involves the formation of a hemiacetal intermediate between G3P and a cysteine residue, and this hemiacetal intermediate is then oxidized to a thioester, with concomitant reduction of NAD to NADH. The reduced NADH is then exchanged with the second NAD, and the thioester is attacked by a nucleophilic inorganic phosphate to produce BPG. This chain is Glyceraldehyde-3-phosphate dehydrogenase 2 (gapA2), found in Staphylococcus aureus (strain COL).